A 150-amino-acid chain; its full sequence is Cyanate hydratase (150 aa).

Active-site residues include Arg-91, Glu-94, and Ser-117.

Belongs to the cyanase family.

It carries out the reaction cyanate + hydrogencarbonate + 3 H(+) = NH4(+) + 2 CO2. Functionally, catalyzes the reaction of cyanate with bicarbonate to produce ammonia and carbon dioxide. The protein is Cyanate hydratase of Synechococcus sp. (strain CC9311).